We begin with the raw amino-acid sequence, 266 residues long: MHVNGKVALVTGAAQGIGRAFAEALLLKGAKVALVDWNLEAGVQCKAALDEQFEPQKTLFIQCDVADQQQLRDTFRKVVDHFGRLDILVNNAGVNNEKNWEKTLQINLVSVISGTYLGLDYMSKQNGGEGGIIINMSSLAGLMPVAQQPVYCASKHGIVGFTRSAALAANLMNSGVRLNAICPGFVNTAILESIEKEENMGQYIEYKDHIKDMIKYYGILDPPLIANGLITLIEDDALNGAIMKITTSKGIHFQDYDTTPFQAKTQ.

NAD(+)-binding positions include 12–20 (GAAQGIGRA), 36–37 (DW), 63–65 (CDV), and asparagine 91. Residues serine 138 and glutamine 148 each contribute to the substrate site. Residue tyrosine 151 is the Proton acceptor of the active site. Residues 151-155 (YCASK) and 186-188 (VNT) contribute to the NAD(+) site.

This sequence belongs to the short-chain dehydrogenases/reductases (SDR) family. Homodimer. In terms of tissue distribution, detected in colon epithelium (at protein level).

It localises to the cytoplasm. The enzyme catalyses prostaglandin E2 + NAD(+) = 15-oxoprostaglandin E2 + NADH + H(+). It catalyses the reaction (15S)-hydroxy-(5Z,8Z,11Z,13E)-eicosatetraenoate + NAD(+) = 15-oxo-(5Z,8Z,11Z,13E)-eicosatetraenoate + NADH + H(+). The catalysed reaction is (11R)-hydroxy-(5Z,8Z,12E,14Z)-eicosatetraenoate + NAD(+) = 11-oxo-(5Z,8Z,12E,14Z)-eicosatetraenoate + NADH + H(+). It carries out the reaction lipoxin A4 + NAD(+) = 15-oxo-(5S,6R)-dihydroxy-(7E,9E,11Z,13E)-eicosatetraenoate + NADH + H(+). The enzyme catalyses 15-oxo-(5S,6R)-dihydroxy-(7E,9E,11Z)-eicosatrienoate + NADH + H(+) = (5S,6R,15S)-trihydroxy-(7E,9E,11Z)-eicosatrienoate + NAD(+). It catalyses the reaction prostaglandin A1 + NAD(+) = 15-oxo-prostaglandin A1 + NADH + H(+). The catalysed reaction is prostaglandin E1 + NAD(+) = 15-oxoprostaglandin E1 + NADH + H(+). It carries out the reaction 14-hydroxy-(4Z,7Z,10Z,12E,16Z,19Z)-docosahexaenoate + NAD(+) = 14-oxo-(4Z,7Z,10Z,12E,16Z,19Z)-docosahexaenoate + NADH + H(+). The enzyme catalyses resolvin E1 + NAD(+) = 18-oxo-resolvin E1 + NADH + H(+). It catalyses the reaction resolvin D1 + NAD(+) = 8-oxoresolvin D1 + NADH + H(+). The catalysed reaction is resolvin D1 + NAD(+) = 17-oxoresolvin D1 + NADH + H(+). It carries out the reaction resolvin D2 + NAD(+) = 7-oxoresolvin D2 + NADH + H(+). The enzyme catalyses resolvin D2 + NAD(+) = 16-oxoresolvin D2 + NADH + H(+). Its function is as follows. Catalyzes the NAD-dependent dehydrogenation (oxidation) of a broad array of hydroxylated polyunsaturated fatty acids (mainly eicosanoids and docosanoids, including prostaglandins, lipoxins and resolvins), yielding their corresponding keto (oxo) metabolites. Decreases the levels of the pro-proliferative prostaglandins such as prostaglandin E2 (whose activity is increased in cancer because of an increase in the expression of cyclooxygenase 2) and generates oxo-fatty acid products that can profoundly influence cell function by abrogating pro-inflammatory cytokine expression. Converts resolvins E1, D1 and D2 to their oxo products, which represents a mode of resolvin inactivation. Resolvin E1 plays important roles during the resolution phase of acute inflammation, while resolvins D1 and D2 have a unique role in obesity-induced adipose inflammation. The protein is 15-hydroxyprostaglandin dehydrogenase [NAD(+)] of Homo sapiens (Human).